The sequence spans 127 residues: Nitrogenase-stabilizing/protective protein NifW (127 aa).

Belongs to the NifW family. As to quaternary structure, homotrimer; associates with NifD.

May protect the nitrogenase Fe-Mo protein from oxidative damage. This is Nitrogenase-stabilizing/protective protein NifW from Rhizobium etli (strain ATCC 51251 / DSM 11541 / JCM 21823 / NBRC 15573 / CFN 42).